Reading from the N-terminus, the 289-residue chain is Acetyl-coenzyme A carboxylase carboxyl transferase subunit beta (289 aa).

One can recognise a CoA carboxyltransferase N-terminal domain in the interval 34 to 289 (MWVKCNKCGE…KLINMHQNSF (256 aa)). 4 residues coordinate Zn(2+): C38, C41, C57, and C60. Residues 38 to 60 (CNKCGEILYQNDLEKNYMVCNLC) form a C4-type zinc finger.

It belongs to the AccD/PCCB family. Acetyl-CoA carboxylase is a heterohexamer composed of biotin carboxyl carrier protein (AccB), biotin carboxylase (AccC) and two subunits each of ACCase subunit alpha (AccA) and ACCase subunit beta (AccD). Zn(2+) is required as a cofactor.

It is found in the cytoplasm. The catalysed reaction is N(6)-carboxybiotinyl-L-lysyl-[protein] + acetyl-CoA = N(6)-biotinyl-L-lysyl-[protein] + malonyl-CoA. Its pathway is lipid metabolism; malonyl-CoA biosynthesis; malonyl-CoA from acetyl-CoA: step 1/1. Its function is as follows. Component of the acetyl coenzyme A carboxylase (ACC) complex. Biotin carboxylase (BC) catalyzes the carboxylation of biotin on its carrier protein (BCCP) and then the CO(2) group is transferred by the transcarboxylase to acetyl-CoA to form malonyl-CoA. The sequence is that of Acetyl-coenzyme A carboxylase carboxyl transferase subunit beta from Clostridium botulinum (strain ATCC 19397 / Type A).